Consider the following 44-residue polypeptide: Phosphatase RapE inhibitor (44 aa).

2 propeptides span residues 1-30 and 36-44; these read MKSK…MKEA and LAPTHEFLV.

Belongs to the Phr family. Contains a predicted signal peptide cleavage site in the N-terminal region, however the propeptide is probably only subject to processing events at the ends of the mature peptide.

The protein resides in the secreted. The protein localises to the cytoplasm. Its function is as follows. Signaling molecule involved in the regulation of sporulation. Secreted during production, but the mature peptide acts intracellularly, indicating that it needs to be imported into the cell to function. Inhibitor of the RapE phosphatase activity. Does not inhibit the phosphatase activity of RapA and RapB. Probably plays a dispensable role in the overall context of sporulation initiation. This is Phosphatase RapE inhibitor (phrE) from Bacillus subtilis (strain 168).